A 731-amino-acid polypeptide reads, in one-letter code: 1,4-alpha-glucan branching enzyme GlgB (731 aa).

Catalysis depends on D412, which acts as the Nucleophile. E465 functions as the Proton donor in the catalytic mechanism.

This sequence belongs to the glycosyl hydrolase 13 family. GlgB subfamily. As to quaternary structure, monomer.

It carries out the reaction Transfers a segment of a (1-&gt;4)-alpha-D-glucan chain to a primary hydroxy group in a similar glucan chain.. It functions in the pathway glycan biosynthesis; glycogen biosynthesis. Catalyzes the formation of the alpha-1,6-glucosidic linkages in glycogen by scission of a 1,4-alpha-linked oligosaccharide from growing alpha-1,4-glucan chains and the subsequent attachment of the oligosaccharide to the alpha-1,6 position. In Bordetella parapertussis (strain 12822 / ATCC BAA-587 / NCTC 13253), this protein is 1,4-alpha-glucan branching enzyme GlgB.